The sequence spans 87 residues: Bombyxin B-10 (87 aa).

Residues 1-19 form the signal peptide; that stretch reads MKTILIFLVVISLMYSGEA. Intrachain disulfides connect cysteine 27–cysteine 73, cysteine 39–cysteine 86, and cysteine 72–cysteine 77. Residues 46–64 constitute a propeptide, bombyxin B-10 C peptide; the sequence is SGAQYAPYFWTRQYLGSRG.

The protein belongs to the insulin family. In terms of assembly, heterodimer of a B chain and an A chain linked by two disulfide bonds.

The protein resides in the secreted. Its function is as follows. Brain peptide responsible for activation of prothoracic glands to produce ecdysone in insects. This is Bombyxin B-10 (BBXB10) from Bombyx mori (Silk moth).